The sequence spans 29 residues: Omega-conotoxin MVIIC (29 aa).

A propeptide spanning residues 1–2 (TR) is cleaved from the precursor. 3 disulfide bridges follow: Cys-3–Cys-18, Cys-10–Cys-22, and Cys-17–Cys-28. Cysteine amide is present on Cys-28.

This sequence belongs to the conotoxin O1 superfamily. In terms of processing, not hydroxylated; hydroxylation, on a synthetic hydroxylated MVIIC, has a significant impact on the oxidative folding but not on the biological activity. In terms of tissue distribution, expressed by the venom duct.

Its subcellular location is the secreted. Omega-conotoxins act at presynaptic membranes, they bind and block voltage-gated calcium channels (Cav). This toxin preferentially blocks P/Q-type calcium channels (Cav2.1/CACNA1A) (IC(50)=0.60 nM). Also shows an inhibition on Cav2.2/CACNA1A channels (IC(50)=7.0 nM). The sequence is that of Omega-conotoxin MVIIC from Conus magus (Magical cone).